Reading from the N-terminus, the 491-residue chain is Cobyric acid synthase (491 aa).

The GATase cobBQ-type domain maps to 246–435 (KIDVAVIKLP…IHGIFDGANF (190 aa)). Cys-327 acts as the Nucleophile in catalysis. His-427 is a catalytic residue.

The protein belongs to the CobB/CobQ family. CobQ subfamily.

The protein operates within cofactor biosynthesis; adenosylcobalamin biosynthesis. In terms of biological role, catalyzes amidations at positions B, D, E, and G on adenosylcobyrinic A,C-diamide. NH(2) groups are provided by glutamine, and one molecule of ATP is hydrogenolyzed for each amidation. The protein is Cobyric acid synthase of Clostridium acetobutylicum (strain ATCC 824 / DSM 792 / JCM 1419 / IAM 19013 / LMG 5710 / NBRC 13948 / NRRL B-527 / VKM B-1787 / 2291 / W).